The sequence spans 505 residues: Aspartyl/glutamyl-tRNA(Asn/Gln) amidotransferase subunit B (505 aa).

The segment at 220–241 (NVSLRPRPAPGDPDAPFGTRSE) is disordered.

It belongs to the GatB/GatE family. GatB subfamily. As to quaternary structure, heterotrimer of A, B and C subunits.

The catalysed reaction is L-glutamyl-tRNA(Gln) + L-glutamine + ATP + H2O = L-glutaminyl-tRNA(Gln) + L-glutamate + ADP + phosphate + H(+). The enzyme catalyses L-aspartyl-tRNA(Asn) + L-glutamine + ATP + H2O = L-asparaginyl-tRNA(Asn) + L-glutamate + ADP + phosphate + 2 H(+). Its function is as follows. Allows the formation of correctly charged Asn-tRNA(Asn) or Gln-tRNA(Gln) through the transamidation of misacylated Asp-tRNA(Asn) or Glu-tRNA(Gln) in organisms which lack either or both of asparaginyl-tRNA or glutaminyl-tRNA synthetases. The reaction takes place in the presence of glutamine and ATP through an activated phospho-Asp-tRNA(Asn) or phospho-Glu-tRNA(Gln). This is Aspartyl/glutamyl-tRNA(Asn/Gln) amidotransferase subunit B from Frankia casuarinae (strain DSM 45818 / CECT 9043 / HFP020203 / CcI3).